A 621-amino-acid chain; its full sequence is Polycystin-2-like protein 2 (621 aa).

Residues 1 to 31 (MSEATWWYRGGTSKHDLHYRREAEVNTTLEE) are Cytoplasmic-facing. A helical membrane pass occupies residues 32-52 (LLLYFIFLINLCILTFGMVNP). Residues 53–277 (HMYYLNKVMS…SVKLLRYVSY (225 aa)) lie on the Extracellular side of the membrane. N-linked (GlcNAc...) asparagine glycans are attached at residues Asn-115 and Asn-138. The helical transmembrane segment at 278 to 298 (YDYFIASCEVIFCIFLFVFII) threads the bilayer. The Cytoplasmic segment spans residues 299–314 (QELRKVNEFKSAYFRS). A helical membrane pass occupies residues 315-335 (VWNWLEMLLLLLCFLAVSFYA). The Extracellular segment spans residues 336–360 (YCNMQSFLLLGQLLKNTDSYPDFYF). The helical transmembrane segment at 361-381 (LAYWHIYYNNVIAITIFFAWI) threads the bilayer. The Cytoplasmic segment spans residues 382–406 (KIFKFISFNETMSQLSSTLSRCMKD). The chain crosses the membrane as a helical span at residues 407–427 (IVGFAIMFFIIFSAYAQLGFL). Topologically, residues 428-468 (VFGSQVDDFSTFQNSIFAQFRIVLGDFNFAGIQQANWILGP) are extracellular. Residues 469–489 (IYFITFIFFVFFVLLNMFLAI) form a helical membrane-spanning segment. At 490-621 (INDTYSEVKA…KLNQLMRKLH (132 aa)) the chain is on the cytoplasmic side. A coiled-coil region spans residues 521–551 (NVLEKLRLKKAQAKEEKKMQTTDLAQRARRD).

This sequence belongs to the polycystin family. As to quaternary structure, interacts with TRPC1 and TRPC5. As to expression, expressed only in testis and heart.

The protein localises to the membrane. Its function is as follows. Exhibits a lower single conductance but no spontaneous channel activity. May function as a regulator of calcium channels or a channel component involving Ca2(+) homeostasis. This is Polycystin-2-like protein 2 from Mus musculus (Mouse).